A 268-amino-acid chain; its full sequence is Tryptophan synthase alpha chain (268 aa).

Catalysis depends on proton acceptor residues Glu49 and Asp60.

This sequence belongs to the TrpA family. As to quaternary structure, tetramer of two alpha and two beta chains.

The enzyme catalyses (1S,2R)-1-C-(indol-3-yl)glycerol 3-phosphate + L-serine = D-glyceraldehyde 3-phosphate + L-tryptophan + H2O. It functions in the pathway amino-acid biosynthesis; L-tryptophan biosynthesis; L-tryptophan from chorismate: step 5/5. The alpha subunit is responsible for the aldol cleavage of indoleglycerol phosphate to indole and glyceraldehyde 3-phosphate. This chain is Tryptophan synthase alpha chain, found in Yersinia pseudotuberculosis serotype O:1b (strain IP 31758).